The sequence spans 104 residues: UPF0145 protein GTNG_1265 (104 aa).

It belongs to the UPF0145 family.

This chain is UPF0145 protein GTNG_1265, found in Geobacillus thermodenitrificans (strain NG80-2).